A 265-amino-acid chain; its full sequence is Phosphonoacetaldehyde hydrolase (265 aa).

The active-site Nucleophile is the Asp-10. The Mg(2+) site is built by Asp-10 and Ala-12. Lys-51 functions as the Schiff-base intermediate with substrate in the catalytic mechanism. Asp-184 serves as a coordination point for Mg(2+).

This sequence belongs to the HAD-like hydrolase superfamily. PhnX family. Homodimer. Mg(2+) serves as cofactor.

It catalyses the reaction phosphonoacetaldehyde + H2O = acetaldehyde + phosphate + H(+). Functionally, involved in phosphonate degradation. In Latilactobacillus sakei subsp. sakei (strain 23K) (Lactobacillus sakei subsp. sakei), this protein is Phosphonoacetaldehyde hydrolase.